We begin with the raw amino-acid sequence, 172 residues long: Small ribosomal subunit protein uS5 (172 aa).

Residues 11 to 74 (LFESVVDIAR…RKAKGAMIRF (64 aa)) enclose the S5 DRBM domain.

The protein belongs to the universal ribosomal protein uS5 family. As to quaternary structure, part of the 30S ribosomal subunit. Contacts proteins S4 and S8.

In terms of biological role, with S4 and S12 plays an important role in translational accuracy. Located at the back of the 30S subunit body where it stabilizes the conformation of the head with respect to the body. The protein is Small ribosomal subunit protein uS5 of Neorickettsia sennetsu (strain ATCC VR-367 / Miyayama) (Ehrlichia sennetsu).